Reading from the N-terminus, the 106-residue chain is Insulin-like peptide 04 (106 aa).

An N-terminal signal peptide occupies residues 1–22 (MPRTFLVVLIYILAGFLCSTSA). Residues 23-37 (LRKVNEASGIKTDGS) constitute a propeptide that is removed on maturation. 3 disulfide bridges follow: cysteine 45–cysteine 50, cysteine 46–cysteine 80, and cysteine 59–cysteine 68. Positions 86-106 (RRKRSLTVDKREAKKFIRQRR) are cleaved as a propeptide — c peptide.

It belongs to the insulin family.

It localises to the secreted. In terms of biological role, insulin decreases blood glucose concentration. May have evolved to activate insulin receptors (INSR) in vertebrates. Molecular docking studies reveals unique interaction with the human insulin receptor. In vivo, insulin-like peptide injection reduces blood glucose levels in two models of zebrafish diabetes (streptozotocin- and glucose-induced). Also shorter swimming distance of zebrafish larvae, an effect which is not observed with human insulin. The chain is Insulin-like peptide 04 from Exaiptasia diaphana (Tropical sea anemone).